Reading from the N-terminus, the 133-residue chain is MVPSAGQLALFALGIFLAVCQALENSTSALSDPPVAAAVVSHFNDCPDSHTQFCFHGTCRFLLQEEKPACVCHSGYVGARCEHADLLAVVAASQKKQAITALVVVTIVALAVLIITCVLIHCCEVRKHSVVVP.

The first 23 residues, 1–23, serve as a signal peptide directing secretion; it reads MVPSAGQLALFALGIFLAVCQAL. A propeptide spans 24–38 (removed in mature form); the sequence is ENSTSALSDPPVAAA. The Extracellular segment spans residues 24-97; the sequence is ENSTSALSDP…AVVAASQKKQ (74 aa). Asn25 carries an N-linked (GlcNAc...) asparagine glycan. Residues 42–82 form the EGF-like domain; the sequence is HFNDCPDSHTQFCFHGTCRFLLQEEKPACVCHSGYVGARCE. Intrachain disulfides connect Cys46/Cys59, Cys54/Cys70, and Cys72/Cys81. The propeptide at 89 to 133 is removed in mature form; the sequence is VVAASQKKQAITALVVVTIVALAVLIITCVLIHCCEVRKHSVVVP. Residues 98-120 form a helical membrane-spanning segment; the sequence is AITALVVVTIVALAVLIITCVLI. Over 121 to 133 the chain is Cytoplasmic; the sequence is HCCEVRKHSVVVP.

Interacts with the PDZ domains of MAGI3, SDCBP and SNTA1. The interaction with SDCBP, is required for the targeting to the cell surface. In the endoplasmic reticulum, in its immature form (i.e. with a prosegment and lacking full N-glycosylation), interacts with CNIH. In the Golgi apparatus, may form a complex with CNIH and GORASP2. Interacts (via cytoplasmic C-terminal domain) with NKD2. As to expression, skin.

The protein resides in the secreted. The protein localises to the extracellular space. It is found in the cell membrane. Functionally, TGF alpha is a mitogenic polypeptide that is able to bind to the EGF receptor/EGFR and to act synergistically with TGF beta to promote anchorage-independent cell proliferation in soft agar. This Ovis aries (Sheep) protein is Protransforming growth factor alpha (TGFA).